A 9518-amino-acid polypeptide reads, in one-letter code: Nonribosomal peptide synthetase ungA' (9518 aa).

The tract at residues 214–611 is adenylation 1; that stretch reads ERARETPNAP…ARKDDQVKVR (398 aa). The Carrier 1 domain occupies 738-814; that stretch reads APRTEMEWRL…DLAEVARLEQ (77 aa). Ser-775 carries the post-translational modification O-(pantetheine 4'-phosphoryl)serine. The interval 853 to 1250 is condensation 1; sequence DLLPCSPLQE…EEVLRQISRE (398 aa). An adenylation 2 region spans residues 1292–1695; that stretch reads QRVQEQPDRP…GRKDTQVKIR (404 aa). One can recognise a Carrier 2 domain in the interval 1822 to 1898; it reads LPQTELERRL…RLAHCSQTEQ (77 aa). Ser-1859 carries the O-(pantetheine 4'-phosphoryl)serine modification. Positions 1911–2336 are epimerization 1; the sequence is TFALSPIQQL…QRSLEVVAKE (426 aa). Residues 2376-2803 form a condensation 2 region; it reads EDIYPCSPVQ…DNLQIASSQD (428 aa). The segment at 2829–3224 is adenylation 3; sequence RIQQQPEAPA…NRKDNQVKIR (396 aa). Positions 3352–3428 constitute a Carrier 3 domain; it reads APATASEQRL…DMAQTLKVES (77 aa). An O-(pantetheine 4'-phosphoryl)serine modification is found at Ser-3389. Residues 3465–3869 are condensation 3; it reads EDVLPCTPLQ…QVCKEASQYL (405 aa). Residues 3906–4307 form an adenylation 4 region; that stretch reads QQAHQRPNAS…GRRDAQVKIR (402 aa). The 77-residue stretch at 4436–4512 folds into the Carrier 4 domain; that stretch reads TPTTITECRI…RLAACTTPVD (77 aa). The residue at position 4473 (Ser-4473) is an O-(pantetheine 4'-phosphoryl)serine. The interval 4527–4954 is epimerization 2; that stretch reads ALSPIQQLFV…EDAAQELPSL (428 aa). The condensation 4 stretch occupies residues 4990–5411; it reads VEDIYPCSPI…ANLISKEDLR (422 aa). Residues 5433-5829 are adenylation 5; it reads SEQAQNQPDA…GRKDGQVKIR (397 aa). The region spanning 5957–6033 is the Carrier 5 domain; that stretch reads VASSPVELAL…QLAKNSGLQA (77 aa). Ser-5994 carries the O-(pantetheine 4'-phosphoryl)serine modification. An epimerization 3 region spans residues 6050-6470; sequence ELSPIQRMFF…CEHSLVMAAH (421 aa). A condensation 5 region spans residues 6512 to 6856; it reads VEDIYPCTPI…TGISVQNNAS (345 aa). The tract at residues 6947-7338 is adenylation 6; that stretch reads LRPNSSAIHA…GRKDSQVKVR (392 aa). The 77-residue stretch at 7464-7540 folds into the Carrier 6 domain; that stretch reads LPRTEVEMQL…GLAPSAASQA (77 aa). Ser-7501 bears the O-(pantetheine 4'-phosphoryl)serine mark. Residues 7555–7978 are epimerization 4; the sequence is ELSPIQQMFI…LQTAARELPH (424 aa). Residues 8016-8444 form a condensation 6 region; the sequence is VEDIYPLTPI…QVDLAGRHDQ (429 aa). The tract at residues 8468–8867 is adenylation 7; the sequence is MQCQQRPDAT…SRKDAQVKIR (400 aa). The Carrier 7 domain occupies 8995–9071; sequence PLTTEMEWRL…DMAHYLREGQ (77 aa). The residue at position 9032 (Ser-9032) is an O-(pantetheine 4'-phosphoryl)serine. The segment at 9111–9454 is condensation 7; that stretch reads DVYPTTELQD…DNLEHDAGTS (344 aa).

The protein belongs to the NRP synthetase family.

It functions in the pathway secondary metabolite biosynthesis. Nonribosomal peptide synthetase; part of the gene cluster that mediates the biosynthesis of the unguisins, gamma-aminobutyric acid (GABA)-containing fungal cyclic heptapeptides with the amino acid sequence cyclo-(D-Ala1-D-Val2-L-Leu3-beta-MePhe4-D-Ala5-D-Trp6-GABA7) for unguisin H and cyclo-(D-Ala1-D-Ala2-L-Leu3-beta-MePhe4-D-Ala5-D-Trp6-GABA7) for unguisin I. UngA' is the main enzyme within the cluster which condenses the 7 residues using its respective 7 modules. The terminal condensation domain (Ct) is involved in cyclization with D-alanine and thereby releasing of unguisins H and I. The alanine racemase ungC' provides D-alanine, which is then accepted by the first adenylation domain of ungA', whereas the methyltransferase ungE' provides the (2R,3R)-beta-methylphenylalanine residue incorporated by the module 4. Finally, the hydrolase ungD' catalyzes the hydrolysis between the D-tryptophan and GABA residues of unguisins H and I to produce the corresponding linear peptides. The protein is Nonribosomal peptide synthetase ungA' of Aspergillus campestris (strain IBT 28561).